The following is a 341-amino-acid chain: UDP-glucose 4-epimerase (341 aa).

Belongs to the polysaccharide synthase family.

The enzyme catalyses UDP-alpha-D-glucose = UDP-alpha-D-galactose. Epimerizes UDP-galactose to UDP-glucose. May contribute to formation of LPS or the exopolysaccharide slime layer by providing UDP-galactose as a substrate for either molecule. The polypeptide is UDP-glucose 4-epimerase (capD) (Rickettsia prowazekii (strain Madrid E)).